Reading from the N-terminus, the 215-residue chain is Nucleoredoxin-like protein 1 (215 aa).

Residues 1–164 (MVDLFLGKVL…GAELIDRNFM (164 aa)) form the Thioredoxin; atypical domain. The disordered stretch occupies residues 190–215 (DEKKKKKKRDDDDDDDDGGGGGGPWG).

It belongs to the nucleoredoxin family.

It localises to the cell projection. It is found in the cilium. Its subcellular location is the photoreceptor outer segment. Functionally, plays an important role in retinal cone photoreceptor survival. May play a role in cone cell viability, slowing down cone degeneration, does not seem to play a role in degenerating rods. In Danio rerio (Zebrafish), this protein is Nucleoredoxin-like protein 1 (nxnl1).